Reading from the N-terminus, the 122-residue chain is Pupal cuticle protein Edg-78E (122 aa).

The first 16 residues, 1 to 16 (MYKYLFCLALIGCACA), serve as a signal peptide directing secretion. Residues 36 to 96 (EGNYQYAYET…PVGDHLPTPP (61 aa)) enclose the Chitin-binding type R&amp;R domain.

Imaginal (anterior) epidermis.

Component of the cuticle of the pupa of fruit fly. The sequence is that of Pupal cuticle protein Edg-78E (Edg78E) from Drosophila melanogaster (Fruit fly).